We begin with the raw amino-acid sequence, 440 residues long: Microtubule-associated tumor suppressor 1 homolog A (440 aa).

Residues 44-67 (KSRTNSKNPQPPTNGQPDLVPPES) form a disordered region. Residues 69–401 (SRNVEYYKAQ…RLSMENEELL (333 aa)) are a coiled coil. The disordered stretch occupies residues 407 to 440 (GDLNSPRKISPSPSLNLQSPRTSGMFSSPPVSPR). Polar residues predominate over residues 417-432 (PSPSLNLQSPRTSGMF).

The protein belongs to the MTUS1 family. In terms of assembly, homodimer.

It is found in the mitochondrion. Its subcellular location is the golgi apparatus. It localises to the cell membrane. The protein resides in the nucleus. In terms of biological role, may inhibit cell proliferation. This chain is Microtubule-associated tumor suppressor 1 homolog A (mtus1a), found in Danio rerio (Zebrafish).